Reading from the N-terminus, the 750-residue chain is Dual specificity tyrosine-phosphorylation-regulated kinase 1A (750 aa).

2 disordered regions span residues 56 to 81 and 104 to 129; these read ALPY…RDPA and YAKK…KVYN. A Bipartite nuclear localization signal motif is present at residues 109–126; sequence RRHQQGQGDDSSHKKERK. One can recognise a Protein kinase domain in the interval 151–471; that stretch reads YEIDSLIGKG…PYYALQHSFF (321 aa). ATP contacts are provided by residues 157–165, lysine 180, and 230–233; these read IGKGSFGQV and FEML. Residue aspartate 279 is the Proton acceptor of the active site. Disordered regions lie at residues 400–434, 477–531, 583–666, and 731–750; these read TKDG…AGES, EGTN…RHSG, SQKN…GNQA, and DRED…VASS. Polar residues predominate over residues 477 to 493; it reads EGTNTSNSVSTSPAMEQ. The segment covering 494–517 has biased composition (low complexity); that stretch reads SQSSGTTSSTSSSSGGSSGTSNSG. The tract at residues 584–612 is histidine-rich domain (HRD); it reads QKNVPHHHGNGSHHHHHHHHHHHGQHILS. Positions 587–608 are enriched in basic residues; sequence VPHHHGNGSHHHHHHHHHHHGQ. Residues 610–621 show a composition bias toward polar residues; it reads ILSNRTRTRIYN. Residues 622–659 are compositionally biased toward low complexity; that stretch reads SPSTSSSTQDSMDIGNSHHSMTSLSSSTTSSSTSSSST. The segment covering 741 to 750 has biased composition (polar residues); the sequence is CVQQSPVASS.

This sequence belongs to the protein kinase superfamily. CMGC Ser/Thr protein kinase family. MNB/DYRK subfamily. Post-translationally, autophosphorylated on tyrosine residues.

Its subcellular location is the nucleus. It localises to the nucleus speckle. It carries out the reaction L-seryl-[protein] + ATP = O-phospho-L-seryl-[protein] + ADP + H(+). The enzyme catalyses L-threonyl-[protein] + ATP = O-phospho-L-threonyl-[protein] + ADP + H(+). The catalysed reaction is L-tyrosyl-[protein] + ATP = O-phospho-L-tyrosyl-[protein] + ADP + H(+). It catalyses the reaction [DNA-directed RNA polymerase] + ATP = phospho-[DNA-directed RNA polymerase] + ADP + H(+). Dual-specificity kinase which possesses both serine/threonine and tyrosine kinase activities. Exhibits a substrate preference for proline at position P+1 and arginine at position P-3. Plays an important role in double-strand breaks (DSBs) repair following DNA damage. Mechanistically, phosphorylates RNF169 and increases its ability to block accumulation of TP53BP1 at the DSB sites thereby promoting homologous recombination repair (HRR). Also acts as a positive regulator of transcription by acting as a CTD kinase that mediates phosphorylation of the CTD (C-terminal domain) of the large subunit of RNA polymerase II (RNAP II) POLR2A. Modulates alternative splicing by phosphorylating the splice factor SRSF6. Phosphorylates SEPTIN4, SEPTIN5 and SF3B1. The chain is Dual specificity tyrosine-phosphorylation-regulated kinase 1A from Xenopus laevis (African clawed frog).